A 492-amino-acid polypeptide reads, in one-letter code: Asparagine--tRNA ligase, mitochondrial (492 aa).

The protein belongs to the class-II aminoacyl-tRNA synthetase family.

Its subcellular location is the mitochondrion matrix. It carries out the reaction tRNA(Asn) + L-asparagine + ATP = L-asparaginyl-tRNA(Asn) + AMP + diphosphate + H(+). In terms of biological role, catalyzes the attachment of asparagine to tRNA(Asn) in the mitochondrion. The protein is Asparagine--tRNA ligase, mitochondrial (SLM5) of Saccharomyces cerevisiae (strain ATCC 204508 / S288c) (Baker's yeast).